The chain runs to 398 residues: MKINSPKDLDFKPGSSVFLRCDFNVPLDEFGNITDDRRIRMALPTIKYLLDNECKIVIASHLGRPKGEFDEKYSLKPVAKRLSHLLKQDVIMAKDVVGPDAKEKASKLQNGEILLLENVRFDPRETKNDEGFAKELSEFGEFYINDAFGVSHRAHASVEAITRFYDNEHKAAGFLLLKEINFFYKLLENPVRPFVAVVGGSKVSGKLQALINLLPKVDKIIIGGGMAFTFLKAMGYNVGNSLVEDELIDEALKIMAEAKRLGVKFYLPVDIVIADKFAEDAMVKYVTAQEIPDGWMGLDIGPASVRLFGEVLWDAQTILWNGPMGVFEMDKFSRGTFKISHEIARSHGIKVVGGGDTADAVQRAGDDEEMTFISTGGGASLELLEGKKLPGIAALEIK.

Residues 22 to 24 (DFN), Arg-38, 61 to 64 (HLGR), Arg-120, and Arg-153 contribute to the substrate site. ATP-binding positions include Lys-206, Gly-297, Glu-328, and 354–357 (GGDT).

The protein belongs to the phosphoglycerate kinase family. In terms of assembly, monomer.

It is found in the cytoplasm. It carries out the reaction (2R)-3-phosphoglycerate + ATP = (2R)-3-phospho-glyceroyl phosphate + ADP. It participates in carbohydrate degradation; glycolysis; pyruvate from D-glyceraldehyde 3-phosphate: step 2/5. This is Phosphoglycerate kinase from Nautilia profundicola (strain ATCC BAA-1463 / DSM 18972 / AmH).